Consider the following 264-residue polypeptide: MENLKKYLEVAKIAALAGGQVLKENFGKVKKENIEEKGEKDFVSYVDKTSEERIKEVILKFFPDHEVVGEEMGAEGSGSEYRWFIDPLDGTKNYINGFPIFAVSVGLVKGEEPIVGAVYLPYFDKLYWGAKGLGAYVNGKRIKVKDNESLKHAGVVYGFPSRSRRDISIYLNIFKDVFYEVGSMRRPGAAAVDLCMVAEGIFDGMMEFEMKPWDITAGLVILKEAGGVYTLVGEPFGVSDIIAGNKALHDFILQVAKKYMEVAV.

Glu-70, Asp-86, Leu-88, and Asp-89 together coordinate Mg(2+). Substrate-binding positions include 89 to 91 (DGT), Arg-185, and Ala-190. Position 214 (Asp-214) interacts with Mg(2+).

It belongs to the inositol monophosphatase superfamily. FBPase class 4 family. Mg(2+) is required as a cofactor.

The catalysed reaction is beta-D-fructose 1,6-bisphosphate + H2O = beta-D-fructose 6-phosphate + phosphate. It catalyses the reaction a myo-inositol phosphate + H2O = myo-inositol + phosphate. Its function is as follows. Phosphatase with broad specificity; it can dephosphorylate fructose 1,6-bisphosphate, and both D and L isomers of inositol-1-phosphate (I-1-P). This chain is Fructose-1,6-bisphosphatase/inositol-1-monophosphatase (suhB), found in Aquifex aeolicus (strain VF5).